We begin with the raw amino-acid sequence, 373 residues long: 4-hydroxy-3-methylbut-2-en-1-yl diphosphate synthase (flavodoxin) (373 aa).

The [4Fe-4S] cluster site is built by Cys270, Cys273, Cys305, and Glu312.

The protein belongs to the IspG family. It depends on [4Fe-4S] cluster as a cofactor.

It carries out the reaction (2E)-4-hydroxy-3-methylbut-2-enyl diphosphate + oxidized [flavodoxin] + H2O + 2 H(+) = 2-C-methyl-D-erythritol 2,4-cyclic diphosphate + reduced [flavodoxin]. Its pathway is isoprenoid biosynthesis; isopentenyl diphosphate biosynthesis via DXP pathway; isopentenyl diphosphate from 1-deoxy-D-xylulose 5-phosphate: step 5/6. Converts 2C-methyl-D-erythritol 2,4-cyclodiphosphate (ME-2,4cPP) into 1-hydroxy-2-methyl-2-(E)-butenyl 4-diphosphate. This Pectobacterium carotovorum subsp. carotovorum (strain PC1) protein is 4-hydroxy-3-methylbut-2-en-1-yl diphosphate synthase (flavodoxin).